The following is a 488-amino-acid chain: E3 ubiquitin-protein ligase RNF8 (488 aa).

One can recognise an FHA domain in the interval 38–92 (VTIGRGLSVTYQLISKVCPLMISRSHCVLKQNPEGQWTIMDNKSLNGVWLNRERL). Residues 68-72 (QNPEG) are required for interaction with PIWIL1. Residues 141 to 164 (DQRMEKHKGSRTKRKFSSPGLENL) form a disordered region. Residues 145–156 (EKHKGSRTKRKF) are compositionally biased toward basic residues. Phosphoserine is present on Ser-157. The segment at 406-444 (CIICSEYFIEAVTLNCAHSFCSFCINEWMKRKVECPICR) adopts an RING-type zinc-finger fold.

The protein belongs to the RNF8 family. Homodimer. Forms a E2-E3 ubiquitin ligase complex composed of the RNF8 homodimer and a E2 heterodimer of UBE2N and UBE2V2. Interacts with class III E2s, including UBE2E1, UBE2E2, and UBE2E3 and with UBE2N. Interacts with RXRA. Interacts (via FHA domain) with ATM-phosphorylated MDC1. Interacts (via FHA domain) with 'Thr-4829' phosphorylated HERC2 (via C-terminus). Interacts with PIWIL1; leading to sequester RNF8 in the cytoplasm. Interacts with WRAP53/TCAB1. As to quaternary structure, (Microbial infection) May interact with the L.monocytogenes protein actA; however, given these errors in the sequence (AJ242721), the relevance of the interaction with actA remains to be confirmed. Autoubiquitinated through 'Lys-48' and 'Lys-63' of ubiquitin. 'Lys-63' polyubiquitination is mediated by UBE2N. 'Lys-29'-type polyubiquitination is also observed, but it doesn't require its own functional RING-type zinc finger.

It localises to the nucleus. Its subcellular location is the cytoplasm. The protein localises to the midbody. The protein resides in the chromosome. It is found in the telomere. The enzyme catalyses S-ubiquitinyl-[E2 ubiquitin-conjugating enzyme]-L-cysteine + [acceptor protein]-L-lysine = [E2 ubiquitin-conjugating enzyme]-L-cysteine + N(6)-ubiquitinyl-[acceptor protein]-L-lysine.. It participates in protein modification; protein ubiquitination. In terms of biological role, E3 ubiquitin-protein ligase that plays a key role in DNA damage signaling via 2 distinct roles: by mediating the 'Lys-63'-linked ubiquitination of histones H2A and H2AX and promoting the recruitment of DNA repair proteins at double-strand breaks (DSBs) sites, and by catalyzing 'Lys-48'-linked ubiquitination to remove target proteins from DNA damage sites. Following DNA DSBs, it is recruited to the sites of damage by ATM-phosphorylated MDC1 and catalyzes the 'Lys-63'-linked ubiquitination of histones H2A and H2AX, thereby promoting the formation of TP53BP1 and BRCA1 ionizing radiation-induced foci (IRIF). Also controls the recruitment of UIMC1-BRCC3 (RAP80-BRCC36) and PAXIP1/PTIP to DNA damage sites. Promotes the recruitment of NBN to DNA damage sites by catalyzing 'Lys-6'-linked ubiquitination of NBN. Also recruited at DNA interstrand cross-links (ICLs) sites and catalyzes 'Lys-63'-linked ubiquitination of histones H2A and H2AX, leading to recruitment of FAAP20 and Fanconi anemia (FA) complex, followed by interstrand cross-link repair. H2A ubiquitination also mediates the ATM-dependent transcriptional silencing at regions flanking DSBs in cis, a mechanism to avoid collision between transcription and repair intermediates. Promotes the formation of 'Lys-63'-linked polyubiquitin chains via interactions with the specific ubiquitin-conjugating UBE2N/UBC13 and ubiquitinates non-histone substrates such as PCNA. Substrates that are polyubiquitinated at 'Lys-63' are usually not targeted for degradation. Also catalyzes the formation of 'Lys-48'-linked polyubiquitin chains via interaction with the ubiquitin-conjugating UBE2L6/UBCH8, leading to degradation of substrate proteins such as CHEK2, JMJD2A/KDM4A and KU80/XRCC5: it is still unclear how the preference toward 'Lys-48'- versus 'Lys-63'-linked ubiquitination is regulated but it could be due to RNF8 ability to interact with specific E2 specific ligases. For instance, interaction with phosphorylated HERC2 promotes the association between RNF8 and UBE2N/UBC13 and favors the specific formation of 'Lys-63'-linked ubiquitin chains. Promotes non-homologous end joining (NHEJ) by promoting the 'Lys-48'-linked ubiquitination and degradation the of KU80/XRCC5. Following DNA damage, mediates the ubiquitination and degradation of JMJD2A/KDM4A in collaboration with RNF168, leading to unmask H4K20me2 mark and promote the recruitment of TP53BP1 at DNA damage sites. Following DNA damage, mediates the ubiquitination and degradation of POLD4/p12, a subunit of DNA polymerase delta. In the absence of POLD4, DNA polymerase delta complex exhibits higher proofreading activity. In addition to its function in damage signaling, also plays a role in higher-order chromatin structure by mediating extensive chromatin decondensation. Involved in the activation of ATM by promoting histone H2B ubiquitination, which indirectly triggers histone H4 'Lys-16' acetylation (H4K16ac), establishing a chromatin environment that promotes efficient activation of ATM kinase. Required in the testis, where it plays a role in the replacement of histones during spermatogenesis. At uncapped telomeres, promotes the joining of deprotected chromosome ends by inducing H2A ubiquitination and TP53BP1 recruitment, suggesting that it may enhance cancer development by aggravating telomere-induced genome instability in case of telomeric crisis. Promotes the assembly of RAD51 at DNA DSBs in the absence of BRCA1 and TP53BP1 Also involved in class switch recombination in immune system, via its role in regulation of DSBs repair. May be required for proper exit from mitosis after spindle checkpoint activation and may regulate cytokinesis. May play a role in the regulation of RXRA-mediated transcriptional activity. Not involved in RXRA ubiquitination by UBE2E2. The protein is E3 ubiquitin-protein ligase RNF8 of Mus musculus (Mouse).